We begin with the raw amino-acid sequence, 247 residues long: Small ribosomal subunit protein uS3 (247 aa).

Positions 39-107 (VRDYLRKKLD…PAQVNIEEIT (69 aa)) constitute a KH type-2 domain. The disordered stretch occupies residues 213–247 (SVYNPPKEDKTRAPKRRGRSNSNRRNSDRANTDRG). Residues 237–247 (RNSDRANTDRG) are compositionally biased toward basic and acidic residues.

It belongs to the universal ribosomal protein uS3 family. As to quaternary structure, part of the 30S ribosomal subunit. Forms a tight complex with proteins S10 and S14.

In terms of biological role, binds the lower part of the 30S subunit head. Binds mRNA in the 70S ribosome, positioning it for translation. The protein is Small ribosomal subunit protein uS3 of Psychrobacter sp. (strain PRwf-1).